A 160-amino-acid chain; its full sequence is Probable chemoreceptor glutamine deamidase CheD 2 (160 aa).

It belongs to the CheD family.

It catalyses the reaction L-glutaminyl-[protein] + H2O = L-glutamyl-[protein] + NH4(+). Functionally, probably deamidates glutamine residues to glutamate on methyl-accepting chemotaxis receptors (MCPs), playing an important role in chemotaxis. The polypeptide is Probable chemoreceptor glutamine deamidase CheD 2 (Geobacter sulfurreducens (strain ATCC 51573 / DSM 12127 / PCA)).